A 111-amino-acid chain; its full sequence is Large ribosomal subunit protein P2B (111 aa).

The tract at residues 62 to 111 (LASVPSGGAAAGGASASTGAAAGGAAEAEEEKEEEAKEESDDDMGFGLFD) is disordered. Positions 67 to 87 (SGGAAAGGASASTGAAAGGAA) are enriched in low complexity. Positions 88–105 (EAEEEKEEEAKEESDDDM) are enriched in acidic residues. Ser101 carries the post-translational modification Phosphoserine.

This sequence belongs to the eukaryotic ribosomal protein P1/P2 family.

Plays an important role in the elongation step of protein synthesis. The chain is Large ribosomal subunit protein P2B (RPP2B) from Candida albicans (Yeast).